We begin with the raw amino-acid sequence, 487 residues long: MVTKTLSIVFVASEVDGLIKSGGLADVAKALPKSLKELGHSVQIVMPAYKTIAGRDDAEIILTTQLEHWPHTAYQVRSLNVDGIPVFAIESGDYFERAEMYAENNQAYADNGERFAFFSAATLDLLPKLLNKKPDIIHVNDWHTGLIPYLLKKRYVENEFYHQTRSVLSIHNAVFKGIFHYDEIACLSEFKSHFVPEASISHTHVSMLKAGVQCADKINAVSPNYAKELLTELGSHGMASDFQDRESDLIGILNGCDYSEWNPEKDSYIPKQFKVNRISMVRGKKACKAALQQELSLPQKDVAMYGMVCRLTNQKGIQYLLPILEQFLKNDLQLVIVGTGDPVLATRLTEIAQEHSDKFAFVEAYDNKLAHWVEAGSDFFIMPSEFEPCGLNQIYSMAYGTLPIVREVGGLKDSVNNYDDDIENATGFSFKNPEPMELLLVLMRSLLLYSQNLNEVKRVQLHAMKQDFCWNKAALKYIEMYRTAINS.

Lys-20 serves as a coordination point for ADP-alpha-D-glucose.

It belongs to the glycosyltransferase 1 family. Bacterial/plant glycogen synthase subfamily.

The enzyme catalyses [(1-&gt;4)-alpha-D-glucosyl](n) + ADP-alpha-D-glucose = [(1-&gt;4)-alpha-D-glucosyl](n+1) + ADP + H(+). Its pathway is glycan biosynthesis; glycogen biosynthesis. In terms of biological role, synthesizes alpha-1,4-glucan chains using ADP-glucose. The protein is Glycogen synthase of Aliivibrio fischeri (strain ATCC 700601 / ES114) (Vibrio fischeri).